A 357-amino-acid polypeptide reads, in one-letter code: D-amino-acid oxidase (357 aa).

Residues alanine 13, glycine 14, serine 42, glycine 47, arginine 289, glycine 315, and glycine 318 each coordinate FAD. Position 289 (arginine 289) interacts with D-proline. Arginine 289 serves as a coordination point for D-serine.

The protein belongs to the DAMOX/DASOX family. FAD serves as cofactor.

The protein localises to the cytoplasm. It localises to the secreted. The protein resides in the cell wall. It catalyses the reaction a D-alpha-amino acid + O2 + H2O = a 2-oxocarboxylate + H2O2 + NH4(+). It carries out the reaction D-phenylalanine + O2 + H2O = 3-phenylpyruvate + H2O2 + NH4(+). The catalysed reaction is D-lysine + O2 + H2O = 6-amino-2-oxohexanoate + H2O2 + NH4(+). The enzyme catalyses D-methionine + O2 + H2O = 4-methylsulfanyl-2-oxobutanoate + H2O2 + NH4(+). It catalyses the reaction D-arginine + O2 + H2O = 5-guanidino-2-oxopentanoate + H2O2 + NH4(+). It carries out the reaction D-ornithine + O2 + H2O = 5-amino-2-oxopentanoate + H2O2 + NH4(+). The catalysed reaction is D-leucine + O2 + H2O = 4-methyl-2-oxopentanoate + H2O2 + NH4(+). The enzyme catalyses D-histidine + O2 + H2O = 3-(imidazol-5-yl)pyruvate + H2O2 + NH4(+). Activated by manganese, copper, and iron ions. Inhibited by barium, aluminum, and zinc ions. Its function is as follows. Catalyzes the oxidative deamination of D-amino acids with broad substrate specificity. This chain is D-amino-acid oxidase, found in Unknown prokaryotic organism.